The chain runs to 250 residues: Ubiquitin-conjugating enzyme E2 6 (250 aa).

Residues 1-232 (MATKQAHKRL…DGKEPNDSSS (232 aa)) are Cytoplasmic-facing. The region spanning 5–167 (QAHKRLTKEY…VQENVETLEK (163 aa)) is the UBC core domain. Cysteine 87 acts as the Glycyl thioester intermediate in catalysis. Serine 139 bears the Phosphoserine mark. Threonine 178 is modified (phosphothreonine). Residues 209-229 (AEQALRQSENNSKKDGKEPND) are disordered. Residues 219-228 (NSKKDGKEPN) are compositionally biased toward basic and acidic residues. A helical transmembrane segment spans residues 233–249 (MVYIGIAIFLFLVGLFM).

The protein belongs to the ubiquitin-conjugating enzyme family.

It is found in the endoplasmic reticulum membrane. The enzyme catalyses S-ubiquitinyl-[E1 ubiquitin-activating enzyme]-L-cysteine + [E2 ubiquitin-conjugating enzyme]-L-cysteine = [E1 ubiquitin-activating enzyme]-L-cysteine + S-ubiquitinyl-[E2 ubiquitin-conjugating enzyme]-L-cysteine.. The protein operates within protein modification; protein ubiquitination. Functionally, catalyzes the covalent attachment of ubiquitin to other proteins. Functions in degradation of misfolded or regulated proteins localized in the endoplasmic reticulum (ER) lumen or membrane via the ubiquitin-proteasome system. Cognate E2 conjugating enzyme for the DOA10 ubiquitin ligase complex, which is part of the ERAD-C pathway responsible for the rapid degradation of membrane proteins with misfolded cytoplasmic domains. This chain is Ubiquitin-conjugating enzyme E2 6 (UBC6), found in Saccharomyces cerevisiae (strain ATCC 204508 / S288c) (Baker's yeast).